An 88-amino-acid chain; its full sequence is Low calcium response locus protein S (88 aa).

The protein belongs to the transposase 8 family.

In Yersinia pestis, this protein is Low calcium response locus protein S (lcrS).